Here is a 664-residue protein sequence, read N- to C-terminus: Sodium/glucose cotransporter 1 (664 aa).

Topologically, residues 1-24 are extracellular; the sequence is MDSSTWSPPATATAEPLQAYERIR. The helical transmembrane segment at 25-47 threads the bilayer; that stretch reads NAADISVIVIYFVVVMAVGLWAM. Topologically, residues 48-66 are cytoplasmic; it reads FSTNRGTVGGFFLAGRSMV. A helical transmembrane segment spans residues 67 to 90; it reads WWPIGASLFASNIGSGHFVGLAGT. Over 91-95 the chain is Extracellular; that stretch reads GAAAG. The chain crosses the membrane as a helical span at residues 96–117; sequence IATGGFEWNALILVVLLGWVFV. The Cytoplasmic portion of the chain corresponds to 118–139; sequence PIYIKAGVVTMPEYLRKRFGGQ. A helical membrane pass occupies residues 140-169; sequence RIQVYLSVLSLVLYIFTKISADIFSGAIFI. Topologically, residues 170-176 are extracellular; it reads NLALGLD. The chain crosses the membrane as a helical span at residues 177–193; the sequence is LYLAIFILLAITALYTI. Residues 194 to 202 are Cytoplasmic-facing; that stretch reads TGGLAAVIY. Residues 203–221 form a helical membrane-spanning segment; it reads TDTLQTVIMLLGSFILTGF. The Extracellular segment spans residues 222-275; that stretch reads AFHEVGGYSAFVTKYMNAIPTVTSYGNTTVKKECYTPRADSFHIFRDPLKGDLP. An N-linked (GlcNAc...) asparagine glycan is attached at Asn248. 5 disulfides stabilise this stretch: Cys255–Cys511, Cys255–Cys610, Cys345–Cys351, Cys355–Cys361, and Cys517–Cys522. The chain crosses the membrane as a helical span at residues 276–295; the sequence is WPGLIFGLTIISLWYWCTDQ. Residues 296–309 are Cytoplasmic-facing; that stretch reads VIVQRCLSAKNMSH. A helical membrane pass occupies residues 310–331; sequence VKAGCIMCGYMKLLPMFLMVMP. Topologically, residues 332–375 are extracellular; it reads GMISRILFTEKVACTVPSECEKYCGTKVGCTNIAYPTLVVELMP. A helical membrane pass occupies residues 376–406; that stretch reads NGLRGLMLSVMLASLMSSLTSIFNSASTLFT. Residues 407 to 422 lie on the Cytoplasmic side of the membrane; sequence MDIYTKIRKKASEKEL. The helical transmembrane segment at 423 to 444 threads the bilayer; it reads MIAGRLFMLVLIGVSIAWVPIV. Over 445 to 451 the chain is Extracellular; it reads QSAQSGQ. Residues 452–477 form a helical membrane-spanning segment; that stretch reads LFDYIQSITSYLGPPIAAVFLLAIFC. Gln457 contributes to the D-glucose binding site. Over 478–481 the chain is Cytoplasmic; sequence KRVN. A helical transmembrane segment spans residues 482 to 504; sequence EPGAFWGLIIGFLIGVSRMITEF. Over 505–525 the chain is Extracellular; it reads AYGTGSCMEPSNCPTIICGVH. A helical transmembrane segment spans residues 526–547; sequence YLYFAIILFVITIIVILAISLF. Residues 548-644 lie on the Cytoplasmic side of the membrane; it reads TKPIADVHLY…TSEKRLWRMV (97 aa). A helical transmembrane segment spans residues 645–662; that stretch reads VNINGIILLAVAVFCHAY. The Extracellular portion of the chain corresponds to 663–664; it reads FA.

It belongs to the sodium:solute symporter (SSF) (TC 2.A.21) family. Post-translationally, N-glycosylation is not necessary for the cotransporter function.

Its subcellular location is the apical cell membrane. It carries out the reaction D-glucose(out) + 2 Na(+)(out) = D-glucose(in) + 2 Na(+)(in). The enzyme catalyses D-galactose(out) + 2 Na(+)(out) = D-galactose(in) + 2 Na(+)(in). With respect to regulation, enhanced by the interaction with PDZK1IP1/MAP17; but unlike SLC5A2/SGLT2, PDZK1IP1 is not essential for SLC5A1 transporter activity. Possibly modulated by cholesterol binding. Its function is as follows. Electrogenic Na(+)-coupled sugar symporter that actively transports D-glucose or D-galactose at the plasma membrane, with a Na(+) to sugar coupling ratio of 2:1. Transporter activity is driven by a transmembrane Na(+) electrochemical gradient set by the Na(+)/K(+) pump. Has a primary role in the transport of dietary monosaccharides from enterocytes to blood. Responsible for the absorption of D-glucose or D-galactose across the apical brush-border membrane of enterocytes, whereas basolateral exit is provided by GLUT2. Additionally, functions as a D-glucose sensor in enteroendocrine cells, triggering the secretion of the incretins GCG and GIP that control food intake and energy homeostasis. Together with SGLT2, functions in reabsorption of D-glucose from glomerular filtrate, playing a nonredundant role in the S3 segment of the proximal tubules. Transports D-glucose into endometrial epithelial cells, controlling glycogen synthesis and nutritional support for the embryo as well as the decidual transformation of endometrium prior to conception. Acts as a water channel enabling passive water transport in response to the osmotic gradient created upon sugar and Na(+) uptake. Has high water conductivity comparable to aquaporins and therefore is expected to play an important role in transepithelial water permeability, especially in the small intestine. The polypeptide is Sodium/glucose cotransporter 1 (SLC5A1) (Ovis aries (Sheep)).